The sequence spans 515 residues: Maturase K (515 aa).

This sequence belongs to the intron maturase 2 family. MatK subfamily.

Its subcellular location is the plastid. The protein localises to the chloroplast. Functionally, usually encoded in the trnK tRNA gene intron. Probably assists in splicing its own and other chloroplast group II introns. The chain is Maturase K from Sorghum bicolor (Sorghum).